Reading from the N-terminus, the 380-residue chain is Erythronate-4-phosphate dehydrogenase (380 aa).

Substrate contacts are provided by Ser45 and Thr66. NAD(+) contacts are provided by residues Asp146, Thr174, 205 to 207 (ASR), and Asp231. The active site involves Arg207. The active site involves Glu236. Catalysis depends on His253, which acts as the Proton donor. Gly256 contributes to the NAD(+) binding site. Position 257 (Tyr257) interacts with substrate.

It belongs to the D-isomer specific 2-hydroxyacid dehydrogenase family. PdxB subfamily. Homodimer.

Its subcellular location is the cytoplasm. The catalysed reaction is 4-phospho-D-erythronate + NAD(+) = (R)-3-hydroxy-2-oxo-4-phosphooxybutanoate + NADH + H(+). Its pathway is cofactor biosynthesis; pyridoxine 5'-phosphate biosynthesis; pyridoxine 5'-phosphate from D-erythrose 4-phosphate: step 2/5. Catalyzes the oxidation of erythronate-4-phosphate to 3-hydroxy-2-oxo-4-phosphonooxybutanoate. This is Erythronate-4-phosphate dehydrogenase from Pseudomonas putida (strain W619).